The sequence spans 207 residues: Macrophage immunometabolism regulator (207 aa).

Met-1 carries the post-translational modification N-acetylmethionine. The interval 1–41 is disordered; that stretch reads MEVDINGDSRSTLTTLPLPVAEGSSPGKAEAEKPRCSSTPC. 2 positions are modified to phosphoserine: Ser-25 and Ser-167.

This sequence belongs to the UNC119-binding protein family. As to quaternary structure, interacts with UNC119 and UNC119B; interaction preferentially takes place when UNC119 and UNC119B are unliganded with myristoylated proteins. As to expression, highly expressed in photoreceptors.

The protein localises to the cytoplasm. It localises to the cell projection. The protein resides in the cilium. Its function is as follows. Regulates the macrophage function, by enhancing the resolution of inflammation and wound repair functions mediated by M2 macrophages. The regulation of macrophage function is, due at least in part, to its ability to inhibit glycolysis. May also play a role in trafficking of proteins via its interaction with UNC119 and UNC119B cargo adapters: may help the release of UNC119 and UNC119B cargo or the recycling of UNC119 and UNC119B. May play a role in ciliary membrane localization via its interaction with UNC119B and protein transport into photoreceptor cells. This chain is Macrophage immunometabolism regulator, found in Mus musculus (Mouse).